The chain runs to 343 residues: MAKTYKIAVIPGDGIGKEVTPWAQKALEKAAEGVADFEYENFDLGAERYLRDGAILPEDEEGRIKANDAILLGAVGDPRIKAGILERGLLLKLRFDLDQYVNLRPSKLYKGVTSPLANPGDIDFVVVREGTEGLYCGAGGAVRRNTPQEVATEVSINTAYGVERVVRYAFKLAMKRKKHVTLVHKKNVLVNAGDMWQRIVDKVGEEYPEVTHDYQHIDAATIFLVSDPSRFDVILTDNLFGDILTDEAGSVVGGVGYSASGCINASDEFPSMFEPIHGSAPDIAGQNKANPTAAILSAAMLLEHLGFDDAAKKIHTAVEADIEELGSTVRSTDQVGKDILARM.

Positions 94, 104, 128, and 218 each coordinate substrate. Positions 218, 242, and 246 each coordinate Mg(2+). An NAD(+)-binding site is contributed by 278-290 (GSAPDIAGQNKAN).

This sequence belongs to the isocitrate and isopropylmalate dehydrogenases family. LeuB type 2 subfamily. As to quaternary structure, homodimer. It depends on Mg(2+) as a cofactor. The cofactor is Mn(2+).

The protein resides in the cytoplasm. It carries out the reaction (2R,3S)-3-isopropylmalate + NAD(+) = 4-methyl-2-oxopentanoate + CO2 + NADH. It participates in amino-acid biosynthesis; L-leucine biosynthesis; L-leucine from 3-methyl-2-oxobutanoate: step 3/4. Its function is as follows. Catalyzes the oxidation of 3-carboxy-2-hydroxy-4-methylpentanoate (3-isopropylmalate) to 3-carboxy-4-methyl-2-oxopentanoate. The product decarboxylates to 4-methyl-2 oxopentanoate. This is 3-isopropylmalate dehydrogenase from Bifidobacterium longum subsp. infantis (strain ATCC 15697 / DSM 20088 / JCM 1222 / NCTC 11817 / S12).